Reading from the N-terminus, the 146-residue chain is Leptin (146 aa).

C96 and C146 are joined by a disulfide.

Belongs to the leptin family.

It localises to the secreted. In terms of biological role, key player in the regulation of energy balance and body weight control. Once released into the circulation, has central and peripheral effects by binding LEPR, found in many tissues, which results in the activation of several major signaling pathways. In the hypothalamus, acts as an appetite-regulating factor that induces a decrease in food intake and an increase in energy consumption by inducing anorexinogenic factors and suppressing orexigenic neuropeptides, also regulates bone mass and secretion of hypothalamo-pituitary-adrenal hormones. In the periphery, increases basal metabolism, influences reproductive function, regulates pancreatic beta-cell function and insulin secretion, is pro-angiogenic for endothelial cell and affects innate and adaptive immunity. In the arcuate nucleus of the hypothalamus, activates by depolarization POMC neurons inducing FOS and SOCS3 expression to release anorexigenic peptides and inhibits by hyperpolarization NPY neurons inducing SOCS3 with a consequent reduction on release of orexigenic peptides. In addition to its known satiety inducing effect, has a modulatory role in nutrient absorption. In the intestine, reduces glucose absorption by enterocytes by activating PKC and leading to a sequential activation of p38, PI3K and ERK signaling pathways which exerts an inhibitory effect on glucose absorption. Acts as a growth factor on certain tissues, through the activation of different signaling pathways increases expression of genes involved in cell cycle regulation such as CCND1, via JAK2-STAT3 pathway, or VEGFA, via MAPK1/3 and PI3K-AKT1 pathways. May also play an apoptotic role via JAK2-STAT3 pathway and up-regulation of BIRC5 expression. Pro-angiogenic, has mitogenic activity on vascular endothelial cells and plays a role in matrix remodeling by regulating the expression of matrix metalloproteinases (MMPs) and tissue inhibitors of metalloproteinases (TIMPs). In innate immunity, modulates the activity and function of neutrophils by increasing chemotaxis and the secretion of oxygen radicals. Increases phagocytosis by macrophages and enhances secretion of pro-inflammatory mediators. Increases cytotoxic ability of NK cells. Plays a pro-inflammatory role, in synergy with IL1B, by inducing NOS2 which promotes the production of IL6, IL8 and Prostaglandin E2, through a signaling pathway that involves JAK2, PI3K, MAP2K1/MEK1 and MAPK14/p38. In adaptive immunity, promotes the switch of memory T-cells towards T helper-1 cell immune responses. Increases CD4(+)CD25(-) T-cell proliferation and reduces autophagy during TCR (T-cell receptor) stimulation, through MTOR signaling pathway activation and BCL2 up-regulation. The protein is Leptin (LEP) of Pan troglodytes (Chimpanzee).